The following is a 358-amino-acid chain: Aminomethyltransferase (358 aa).

It belongs to the GcvT family. The glycine cleavage system is composed of four proteins: P, T, L and H.

The catalysed reaction is N(6)-[(R)-S(8)-aminomethyldihydrolipoyl]-L-lysyl-[protein] + (6S)-5,6,7,8-tetrahydrofolate = N(6)-[(R)-dihydrolipoyl]-L-lysyl-[protein] + (6R)-5,10-methylene-5,6,7,8-tetrahydrofolate + NH4(+). The glycine cleavage system catalyzes the degradation of glycine. The sequence is that of Aminomethyltransferase from Francisella tularensis subsp. tularensis (strain FSC 198).